We begin with the raw amino-acid sequence, 442 residues long: Glutamate-1-semialdehyde 2,1-aminomutase (442 aa).

The residue at position 282 (Lys-282) is an N6-(pyridoxal phosphate)lysine.

This sequence belongs to the class-III pyridoxal-phosphate-dependent aminotransferase family. HemL subfamily. In terms of assembly, homodimer. Pyridoxal 5'-phosphate serves as cofactor.

The protein localises to the cytoplasm. The catalysed reaction is (S)-4-amino-5-oxopentanoate = 5-aminolevulinate. It participates in porphyrin-containing compound metabolism; protoporphyrin-IX biosynthesis; 5-aminolevulinate from L-glutamyl-tRNA(Glu): step 2/2. This chain is Glutamate-1-semialdehyde 2,1-aminomutase, found in Polaromonas naphthalenivorans (strain CJ2).